We begin with the raw amino-acid sequence, 399 residues long: Phosphoglycerate kinase (399 aa).

Substrate-binding positions include 22 to 24, Arg-37, 60 to 63, Arg-118, and Arg-151; these read DFN and HFGR. ATP is bound by residues Lys-201, Glu-322, and 352–355; that span reads GGDS.

The protein belongs to the phosphoglycerate kinase family. Monomer.

It localises to the cytoplasm. The catalysed reaction is (2R)-3-phosphoglycerate + ATP = (2R)-3-phospho-glyceroyl phosphate + ADP. It participates in carbohydrate degradation; glycolysis; pyruvate from D-glyceraldehyde 3-phosphate: step 2/5. This is Phosphoglycerate kinase from Wolbachia sp. subsp. Brugia malayi (strain TRS).